Here is a 242-residue protein sequence, read N- to C-terminus: MKVSLFITCLSDVFFPQVGKSVVEIMNQCGVELDFPEGQTCCGQPAYNSGYQEDAKLAAKQMIKAFEHSEYIVTPSGSCASMVHHYYKEMFKGDSEWYEKAVHLADRTYELTDFLVNILGKNDWKSKLVEKAVFHQSCHMSRALGIKEEPLKLLSQVEGLDIKELPYCQDCCGFGGTFAVKMSSISETMVDEKIKHIEATEANLLIGADMGCLMNIGGRLRRENKNIQVLHVAEVLAKGLNK.

The protein belongs to the LutA/YkgE family.

Functionally, is involved in L-lactate degradation and allows cells to grow with lactate as the sole carbon source. The chain is Lactate utilization protein A 2 from Bacillus cereus (strain AH820).